The chain runs to 445 residues: Histidinol dehydrogenase (445 aa).

NAD(+)-binding residues include Tyr-130, Gln-192, and Asn-215. Substrate-binding residues include Ser-238, Gln-260, and His-263. Zn(2+)-binding residues include Gln-260 and His-263. Catalysis depends on proton acceptor residues Glu-328 and His-329. Positions 329, 362, 416, and 421 each coordinate substrate. Asp-362 serves as a coordination point for Zn(2+). Position 421 (His-421) interacts with Zn(2+).

It belongs to the histidinol dehydrogenase family. The cofactor is Zn(2+).

The enzyme catalyses L-histidinol + 2 NAD(+) + H2O = L-histidine + 2 NADH + 3 H(+). The protein operates within amino-acid biosynthesis; L-histidine biosynthesis; L-histidine from 5-phospho-alpha-D-ribose 1-diphosphate: step 9/9. In terms of biological role, catalyzes the sequential NAD-dependent oxidations of L-histidinol to L-histidinaldehyde and then to L-histidine. The sequence is that of Histidinol dehydrogenase from Gloeobacter violaceus (strain ATCC 29082 / PCC 7421).